Reading from the N-terminus, the 84-residue chain is Neurotoxin BmK-M11 (84 aa).

The N-terminal stretch at 1–19 (MNYLVMISFALLLMTGVES) is a signal peptide. The 63-residue stretch at 21–83 (RDAYIAKPEN…VPIRVPGKCH (63 aa)) folds into the LCN-type CS-alpha/beta domain. Disulfide bonds link C31–C82, C35–C55, C41–C65, and C45–C67. R84 is a propeptide (removed by a carboxypeptidase).

The protein belongs to the long (4 C-C) scorpion toxin superfamily. Sodium channel inhibitor family. Alpha subfamily. In terms of tissue distribution, expressed by the venom gland.

The protein localises to the secreted. Functionally, alpha toxins bind voltage-independently at site-3 of sodium channels (Nav) and inhibit the inactivation of the activated channels, thereby blocking neuronal transmission. This recombinant toxin selectively inhibits the fast inactivation of mNav1.4/SCN4A (EC(50)=82.3 nM) (tested in HEK293 cells). This Olivierus martensii (Manchurian scorpion) protein is Neurotoxin BmK-M11.